Consider the following 208-residue polypeptide: MPVGVPKVPYRLPGESAPQWVDLYNRLYRQRLLFMGQELGDELSNQLCGIMIYLFAEDPSIPLFMYINSPGGSVTSGLGVFDIATVMMQDVTTICVGIAASMASLVLSGGSTGQRLALPHARMMIHQPEGGSRGQASDVMYESSEVERLRDIVVDCYVERTHQSRETIIIDLNRDLFMSPRQARSYGLIDAVALPAVKEEYTGFSMFS.

Residue Ser101 is the Nucleophile of the active site. His126 is a catalytic residue.

This sequence belongs to the peptidase S14 family. In terms of assembly, component of the chloroplastic Clp protease core complex.

The protein resides in the plastid. Its subcellular location is the chloroplast stroma. The catalysed reaction is Hydrolysis of proteins to small peptides in the presence of ATP and magnesium. alpha-casein is the usual test substrate. In the absence of ATP, only oligopeptides shorter than five residues are hydrolyzed (such as succinyl-Leu-Tyr-|-NHMec, and Leu-Tyr-Leu-|-Tyr-Trp, in which cleavage of the -Tyr-|-Leu- and -Tyr-|-Trp bonds also occurs).. Its function is as follows. Cleaves peptides in various proteins in a process that requires ATP hydrolysis. Has a chymotrypsin-like activity. Plays a major role in the degradation of misfolded proteins. In Nephroselmis olivacea (Green alga), this protein is ATP-dependent Clp protease proteolytic subunit.